Consider the following 452-residue polypeptide: Bifunctional protein GlmU (452 aa).

The pyrophosphorylase stretch occupies residues 1–226 (MNFSAVILAA…PIEVEGVNDR (226 aa)). Residues 8 to 11 (LAAG), K22, Q73, 78 to 79 (GT), 100 to 102 (YGD), G137, E151, N166, and N224 each bind UDP-N-acetyl-alpha-D-glucosamine. Residue D102 participates in Mg(2+) binding. Mg(2+) is bound at residue N224. The linker stretch occupies residues 227–247 (AQLARLERAYQAAQAQKLLEQ). The interval 248-452 (GVMLRDPSRF…IANWQRPTKK (205 aa)) is N-acetyltransferase. R330 and K348 together coordinate UDP-N-acetyl-alpha-D-glucosamine. H360 (proton acceptor) is an active-site residue. Residues Y363 and N374 each coordinate UDP-N-acetyl-alpha-D-glucosamine. Acetyl-CoA is bound by residues A377, 383-384 (NY), S402, A420, and R437.

The protein in the N-terminal section; belongs to the N-acetylglucosamine-1-phosphate uridyltransferase family. This sequence in the C-terminal section; belongs to the transferase hexapeptide repeat family. In terms of assembly, homotrimer. The cofactor is Mg(2+).

It is found in the cytoplasm. The catalysed reaction is alpha-D-glucosamine 1-phosphate + acetyl-CoA = N-acetyl-alpha-D-glucosamine 1-phosphate + CoA + H(+). It carries out the reaction N-acetyl-alpha-D-glucosamine 1-phosphate + UTP + H(+) = UDP-N-acetyl-alpha-D-glucosamine + diphosphate. It functions in the pathway nucleotide-sugar biosynthesis; UDP-N-acetyl-alpha-D-glucosamine biosynthesis; N-acetyl-alpha-D-glucosamine 1-phosphate from alpha-D-glucosamine 6-phosphate (route II): step 2/2. Its pathway is nucleotide-sugar biosynthesis; UDP-N-acetyl-alpha-D-glucosamine biosynthesis; UDP-N-acetyl-alpha-D-glucosamine from N-acetyl-alpha-D-glucosamine 1-phosphate: step 1/1. The protein operates within bacterial outer membrane biogenesis; LPS lipid A biosynthesis. Catalyzes the last two sequential reactions in the de novo biosynthetic pathway for UDP-N-acetylglucosamine (UDP-GlcNAc). The C-terminal domain catalyzes the transfer of acetyl group from acetyl coenzyme A to glucosamine-1-phosphate (GlcN-1-P) to produce N-acetylglucosamine-1-phosphate (GlcNAc-1-P), which is converted into UDP-GlcNAc by the transfer of uridine 5-monophosphate (from uridine 5-triphosphate), a reaction catalyzed by the N-terminal domain. The protein is Bifunctional protein GlmU of Aliivibrio fischeri (strain ATCC 700601 / ES114) (Vibrio fischeri).